Consider the following 418-residue polypeptide: Synaptotagmin-15 (418 aa).

The Extracellular segment spans residues 1–4 (MAEQ). The helical; Signal-anchor for type III membrane protein transmembrane segment at 5–27 (LAFLIGGIIGGLLLLIGVSCCLW) threads the bilayer. Topologically, residues 28–418 (RRFCATFTYE…WHALCRPTEP (391 aa)) are cytoplasmic. C2 domains follow at residues 144 to 261 (CLGR…HRII) and 275 to 396 (EFGD…EHWG).

Belongs to the synaptotagmin family. Homodimer. As to expression, isoform 1 and isoform 2 are expressed in heart, lung, skeletal muscle and testis; not detected in brain, liver and kidney. Isoform 1 is expressed in spleen.

The protein resides in the membrane. In terms of biological role, may be involved in the trafficking and exocytosis of secretory vesicles in non-neuronal tissues. The protein is Synaptotagmin-15 (Syt15) of Mus musculus (Mouse).